An 86-amino-acid chain; its full sequence is MSKGHSLQDPYLNTLRKEKVPVSIYLVNGIKLQGSIESFDQFVVLLKNTVSQMVYKHAISTVVPARPVRLPSPTDSEHGDSEPGNA.

Residues 9–68 form the Sm domain; it reads DPYLNTLRKEKVPVSIYLVNGIKLQGSIESFDQFVVLLKNTVSQMVYKHAISTVVPARPV. The interval 66–86 is disordered; that stretch reads RPVRLPSPTDSEHGDSEPGNA. The segment covering 75 to 86 has biased composition (basic and acidic residues); sequence DSEHGDSEPGNA.

This sequence belongs to the Hfq family. Homohexamer.

RNA chaperone that binds small regulatory RNA (sRNAs) and mRNAs to facilitate mRNA translational regulation in response to envelope stress, environmental stress and changes in metabolite concentrations. Also binds with high specificity to tRNAs. The chain is RNA-binding protein Hfq from Pseudomonas putida (strain ATCC 700007 / DSM 6899 / JCM 31910 / BCRC 17059 / LMG 24140 / F1).